A 244-amino-acid polypeptide reads, in one-letter code: SPX domain-containing protein 6 (244 aa).

In terms of domain architecture, SPX spans 1 to 147; it reads MKFGKLLKRQ…GGALAAPVAE (147 aa). A disordered region spans residues 212-244; the sequence is GSSTHGRHSLPPLTLPDSDWLRSFQPPSPIPIQ.

This is SPX domain-containing protein 6 (SPX6) from Oryza sativa subsp. indica (Rice).